A 668-amino-acid polypeptide reads, in one-letter code: Acetoin catabolism regulatory protein (668 aa).

In terms of domain architecture, Sigma-54 factor interaction spans 341 to 570 (LTGGDAALQL…NVLEYARAVC (230 aa)). ATP contacts are provided by residues 369–376 (GETGSGKE) and 433–442 (ADGGTLFLDE). The segment covering 586–606 (GPAPSAALPQPGPAQSPAAAP) has biased composition (low complexity). The tract at residues 586 to 611 (GPAPSAALPQPGPAQSPAAAPFDPHQ) is disordered. A DNA-binding region (H-T-H motif) is located at residues 630 to 649 (LSAVARQIGVSRMTLYRRME).

In terms of biological role, required for sigma-54-dependent transcription of acoXABC. In Cupriavidus necator (strain ATCC 17699 / DSM 428 / KCTC 22496 / NCIMB 10442 / H16 / Stanier 337) (Ralstonia eutropha), this protein is Acetoin catabolism regulatory protein (acoR).